Consider the following 411-residue polypeptide: MKQELIERFIRYAKVNTQSDPNSHTCPSTSGQWELARMLVEELKAIGMEDVTIDDNGYVMATLPANTDKNVPVIGFLAHMDTAPEFTGANVNPQLIDSYDGGDIVLNKEQGIILSPNDFPELAHYKGHTLITTDGTTLLGADDKAGIAEIMTAMNYLIQHPEIKHGKVRVAFTPDEEIGRGPHKFDVAKFGAQFAYTVDGGPLGELEYESFNAAEAKITIKGKNVHPGTAKGKMINSIKIAMEFEQQLPAHEAPEHTEGYEGFYHLLSFQGSVEETKLHYIIRDFDREQFEARKAKMKEIAASLAQKYGNDRITLEINDQYYNMREKIEPVRHIVDIAHEAMTNLGIEPKVKPIRGGTDGSQLSYMGLPTPNLFAGGENFHGRYEYISADNMVKAAEVIVEIIKLFEQKAS.

Residue His79 coordinates Zn(2+). Asp81 is an active-site residue. Asp142 is a Zn(2+) binding site. The active-site Proton acceptor is the Glu176. Residues Glu177, Asp199, and His381 each contribute to the Zn(2+) site.

It belongs to the peptidase M20B family. Zn(2+) is required as a cofactor.

The protein localises to the cytoplasm. The enzyme catalyses Release of the N-terminal residue from a tripeptide.. Cleaves the N-terminal amino acid of tripeptides. This chain is Peptidase T, found in Geobacillus kaustophilus (strain HTA426).